Consider the following 929-residue polypeptide: MMRHCRREWLLALCLISVQLLIPTGCEGVLVAASNMSPPALTPLLINQVDQLVEHAWVKCGLDKRTLEDVRRHFNYNHVLAILRRMSGQDIKDTSPDIDGGTSVLSLERRDAILNCLSKQNFMSIAGQDGLKILSADYIKALIASLRTDLAQESSTTKSIPEQAGKPVPGKTSTPKPVNKPTDSVSSPPDRSYKSAPTEKENPPTKSVAEKKKDSSGMPNAFIGLSIAGIALMAHLCLCCFMCHGTSSSDLRDDKPLLTLNPSNLSAASKSSQGNPIDVNKLGVVSLKSEAGQNGDVKLISKEGTNNVNVVHPVSSVSESTLMPPPEGANNVNMVHPEGANNMNVVHPEGANNVNMVHPEGANNVNVNMVHPVGSLSESTPMQPPVMPPPIPKLLSPPAPQAPMPPLKASPVPPPEPSPPPAPKAAPPPPPPKSTGPGPPRPPPPAMPGSSKTRPPPPLKPGAKVGAVENSNEAKTKLKPFFWDKVTANPARSMVWDHLKSGSFQFNEQLMENLFGYNSTDKSSDTKKDLSSKDATQLIRILDPKKAQNLAISLRALGVSPQEVCSAVKEGSELPSDLIQTLIRWSPSNDEELRLRLYSGELFQLGPAEQFLRVIIDIPYIFQRLDALLFMANLPEEASNVKQSFATLEVACQELRNSRLFMKLLEAVLKTGNRMNVGTFRGGAQAFRLDTLLKLSDVKGTDGKTTLLHFVVQEIIRSEGVRAERAAKEQNSGVSSVKTDDLGDKSEQTEDGYKQLGLKVISSLGDELQDVRKAAILDADQLTMSVASLGHKLMKTNEFLNMDMKSLDEDSGFHRKLTHFVQQSQTDITFLLEEEKKMRLLVKDTVDYFHGSAGKDEGLRLFVIVRDFLAMLDKVCKEVKEASKVAPVKAKAKQPSQSLQSFRDPRVNLFPAIQHLRADSSSSSSDDES.

The first 28 residues, 1-28 (MMRHCRREWLLALCLISVQLLIPTGCEG), serve as a signal peptide directing secretion. The interval 153 to 215 (ESSTTKSIPE…KSVAEKKKDS (63 aa)) is disordered. Positions 171-189 (KTSTPKPVNKPTDSVSSPP) are enriched in polar residues. Basic and acidic residues predominate over residues 191-215 (RSYKSAPTEKENPPTKSVAEKKKDS). The chain crosses the membrane as a helical span at residues 222 to 242 (FIGLSIAGIALMAHLCLCCFM). Disordered regions lie at residues 372 to 472 (PVGS…ENSN) and 726 to 749 (AAKE…SEQT). The span at 382-447 (MQPPVMPPPI…GPPRPPPPAM (66 aa)) shows a compositional bias: pro residues. Residues 468-898 (VENSNEAKTK…KAKAKQPSQS (431 aa)) form the FH2 domain. The span at 738-749 (KTDDLGDKSEQT) shows a compositional bias: basic and acidic residues.

The protein belongs to the formin-like family. Class-I subfamily.

The protein localises to the membrane. This Oryza sativa subsp. japonica (Rice) protein is Formin-like protein 11 (FH11).